Consider the following 98-residue polypeptide: uncharacterized protein (98 aa).

This is an uncharacterized protein from Thermotoga maritima (strain ATCC 43589 / DSM 3109 / JCM 10099 / NBRC 100826 / MSB8).